The primary structure comprises 359 residues: Peptide methionine sulfoxide reductase MsrA/MsrB (359 aa).

The peptide methionine sulfoxide reductase A stretch occupies residues 36 to 189 (RVIYLAGGCF…PGGYCHIDLK (154 aa)). Cys44 is an active-site residue. Residues 206–329 (DEVLKKKLTK…NSAALRFIPL (124 aa)) enclose the MsrB domain. The active-site Nucleophile is Cys318.

In the N-terminal section; belongs to the MsrA Met sulfoxide reductase family. This sequence in the C-terminal section; belongs to the MsrB Met sulfoxide reductase family.

The enzyme catalyses L-methionyl-[protein] + [thioredoxin]-disulfide + H2O = L-methionyl-(S)-S-oxide-[protein] + [thioredoxin]-dithiol. It catalyses the reaction [thioredoxin]-disulfide + L-methionine + H2O = L-methionine (S)-S-oxide + [thioredoxin]-dithiol. It carries out the reaction L-methionyl-[protein] + [thioredoxin]-disulfide + H2O = L-methionyl-(R)-S-oxide-[protein] + [thioredoxin]-dithiol. Functionally, has an important function as a repair enzyme for proteins that have been inactivated by oxidation. Catalyzes the reversible oxidation-reduction of methionine sulfoxide in proteins to methionine. This is Peptide methionine sulfoxide reductase MsrA/MsrB (msrAB) from Helicobacter pylori (strain J99 / ATCC 700824) (Campylobacter pylori J99).